A 139-amino-acid chain; its full sequence is Large ribosomal subunit protein bL17 (139 aa).

This sequence belongs to the bacterial ribosomal protein bL17 family. In terms of assembly, part of the 50S ribosomal subunit. Contacts protein L32.

This Azorhizobium caulinodans (strain ATCC 43989 / DSM 5975 / JCM 20966 / LMG 6465 / NBRC 14845 / NCIMB 13405 / ORS 571) protein is Large ribosomal subunit protein bL17.